Reading from the N-terminus, the 191-residue chain is MTPAQTNGTTTVHPHGAKNGSGGSALPTLVVFGFIVTLLFFLFMLYFWNNDVFRKLLRCAWIQRCCDRFDAWQDEVIYRRPSRRSQSDDESRTNSVSSYVLLSPASDGGFDNPALTEAVDSVDDWATTSVFYATSDETADTERRDSQQLLIELPPEPLPPDVVAAMQKAVKRAVQNALRHSHDSWQLHQTL.

A helical transmembrane segment spans residues 28–48; it reads TLVVFGFIVTLLFFLFMLYFW.

It localises to the host membrane. This chain is Protein UL140 (UL140), found in Homo sapiens (Human).